The following is a 549-amino-acid chain: Lipase 4 (549 aa).

Residues 1 to 15 (MKLALVLSLIVSVAA) form the signal peptide. The cysteines at positions 75 and 112 are disulfide-linked. Ser-224 functions as the Acyl-ester intermediate in the catalytic mechanism. Cys-283 and Cys-292 are disulfide-bonded. Glu-356 functions as the Charge relay system in the catalytic mechanism. An N-linked (GlcNAc...) asparagine glycan is attached at Asn-366. His-464 functions as the Charge relay system in the catalytic mechanism.

This sequence belongs to the type-B carboxylesterase/lipase family.

It carries out the reaction a triacylglycerol + H2O = a diacylglycerol + a fatty acid + H(+). This chain is Lipase 4 (LIP4), found in Diutina rugosa (Yeast).